Here is a 123-residue protein sequence, read N- to C-terminus: Small ribosomal subunit protein uS12 (123 aa).

The segment at 1 to 32 (MPTIQQLVRKGRKTKVSKNKTPALKGSPQRRG) is disordered. The segment covering 9 to 18 (RKGRKTKVSK) has biased composition (basic residues). Position 89 is a 3-methylthioaspartic acid (Asp-89).

The protein belongs to the universal ribosomal protein uS12 family. Part of the 30S ribosomal subunit. Contacts proteins S8 and S17. May interact with IF1 in the 30S initiation complex.

In terms of biological role, with S4 and S5 plays an important role in translational accuracy. Interacts with and stabilizes bases of the 16S rRNA that are involved in tRNA selection in the A site and with the mRNA backbone. Located at the interface of the 30S and 50S subunits, it traverses the body of the 30S subunit contacting proteins on the other side and probably holding the rRNA structure together. The combined cluster of proteins S8, S12 and S17 appears to hold together the shoulder and platform of the 30S subunit. This is Small ribosomal subunit protein uS12 from Thermobifida fusca (strain YX).